Reading from the N-terminus, the 334-residue chain is Ferredoxin--NADP reductase (334 aa).

Positions 33, 41, 46, 86, 120, 286, and 327 each coordinate FAD.

This sequence belongs to the ferredoxin--NADP reductase type 2 family. As to quaternary structure, homodimer. The cofactor is FAD.

It carries out the reaction 2 reduced [2Fe-2S]-[ferredoxin] + NADP(+) + H(+) = 2 oxidized [2Fe-2S]-[ferredoxin] + NADPH. The protein is Ferredoxin--NADP reductase of Rickettsia akari (strain Hartford).